Reading from the N-terminus, the 90-residue chain is Probable Fe(2+)-trafficking protein (90 aa).

This sequence belongs to the Fe(2+)-trafficking protein family.

In terms of biological role, could be a mediator in iron transactions between iron acquisition and iron-requiring processes, such as synthesis and/or repair of Fe-S clusters in biosynthetic enzymes. In Photobacterium profundum (strain SS9), this protein is Probable Fe(2+)-trafficking protein.